Consider the following 611-residue polypeptide: ANK repeat-containing protein nipk-1 (611 aa).

A coiled-coil region spans residues 91-149 (NSKSKKKTENQETKEKDEEAEEKKDGPPKDDKELKMKKEKEQEDENAELDEQKKDGDLL). Disordered stretches follow at residues 92–167 (SKSK…SHPY), 212–255 (ISAS…DTSR), and 280–333 (TKEE…LSPR). Basic and acidic residues predominate over residues 97-131 (KTENQETKEKDEEAEEKKDGPPKDDKELKMKKEKE). Polar residues-rich tracts occupy residues 212–223 (ISASTTPDTVLS), 239–255 (ESLQ…DTSR), and 315–333 (GTCS…LSPR). 5 ANK repeats span residues 375-405 (DGDT…TMNE), 417-446 (FGET…SPNS), 452-482 (VGDS…RVNE), 486-527 (DGQT…DPTI), and 532-561 (TGKT…EDTF).

The protein belongs to the iASPP family. In terms of tissue distribution, expressed in the nervous system.

In terms of biological role, acts downstream of the receptor complex composed of ilcr-1 and ilcr-2, which is a signaling complex that modulates neuronal activity and animal behavior in response to sensory neuron input. Mediates signaling of the complex. The protein is ANK repeat-containing protein nipk-1 of Caenorhabditis elegans.